Here is a 162-residue protein sequence, read N- to C-terminus: Dihydrofolate reductase (162 aa).

The region spanning 3-161 (KITIIAACAE…VAYTFVHYLG (159 aa)) is the DHFR domain. 7 to 9 (IAA) contributes to the substrate binding site. Residues 8-9 (AA) and 16-21 (IGAGNA) contribute to the NADP(+) site. Residue D29 participates in substrate binding. 45-48 (GRKT) serves as a coordination point for NADP(+). R60 is a substrate binding site. NADP(+) contacts are provided by residues 65–68 (ISRQ) and 98–103 (MGGAQI). T117 contributes to the substrate binding site.

The protein belongs to the dihydrofolate reductase family.

The enzyme catalyses (6S)-5,6,7,8-tetrahydrofolate + NADP(+) = 7,8-dihydrofolate + NADPH + H(+). It functions in the pathway cofactor biosynthesis; tetrahydrofolate biosynthesis; 5,6,7,8-tetrahydrofolate from 7,8-dihydrofolate: step 1/1. Key enzyme in folate metabolism. Catalyzes an essential reaction for de novo glycine and purine synthesis, and for DNA precursor synthesis. This chain is Dihydrofolate reductase (folA), found in Neisseria gonorrhoeae.